A 483-amino-acid chain; its full sequence is Glutamyl-tRNA(Gln) amidotransferase subunit A (483 aa).

Catalysis depends on charge relay system residues lysine 75 and serine 150. The Acyl-ester intermediate role is filled by serine 174.

It belongs to the amidase family. GatA subfamily. Heterotrimer of A, B and C subunits.

The enzyme catalyses L-glutamyl-tRNA(Gln) + L-glutamine + ATP + H2O = L-glutaminyl-tRNA(Gln) + L-glutamate + ADP + phosphate + H(+). Allows the formation of correctly charged Gln-tRNA(Gln) through the transamidation of misacylated Glu-tRNA(Gln) in organisms which lack glutaminyl-tRNA synthetase. The reaction takes place in the presence of glutamine and ATP through an activated gamma-phospho-Glu-tRNA(Gln). This is Glutamyl-tRNA(Gln) amidotransferase subunit A from Gloeothece citriformis (strain PCC 7424) (Cyanothece sp. (strain PCC 7424)).